The sequence spans 87 residues: Cell division protein ZapA (87 aa).

Positions 64–87 form a coiled coil; that stretch reads VHDYIKLKEEYDRLLQKLHKEKDE.

This sequence belongs to the ZapA family. Type 2 subfamily. Homodimer. Interacts with FtsZ.

It localises to the cytoplasm. Its function is as follows. Activator of cell division through the inhibition of FtsZ GTPase activity, therefore promoting FtsZ assembly into bundles of protofilaments necessary for the formation of the division Z ring. It is recruited early at mid-cell but it is not essential for cell division. This is Cell division protein ZapA from Geobacillus sp. (strain WCH70).